Reading from the N-terminus, the 443-residue chain is Glutamate-1-semialdehyde 2,1-aminomutase (443 aa).

Low complexity predominate over residues methionine 1–glutamine 16. Residues methionine 1–phenylalanine 22 form a disordered region. Lysine 277 carries the N6-(pyridoxal phosphate)lysine modification.

The protein belongs to the class-III pyridoxal-phosphate-dependent aminotransferase family. HemL subfamily. Homodimer. Requires pyridoxal 5'-phosphate as cofactor.

The protein resides in the cytoplasm. It carries out the reaction (S)-4-amino-5-oxopentanoate = 5-aminolevulinate. It participates in porphyrin-containing compound metabolism; protoporphyrin-IX biosynthesis; 5-aminolevulinate from L-glutamyl-tRNA(Glu): step 2/2. This Corynebacterium jeikeium (strain K411) protein is Glutamate-1-semialdehyde 2,1-aminomutase.